The primary structure comprises 536 residues: Anthranilate synthase component 1 2 (536 aa).

Residues Ser59 and 299-301 (PYM) each bind L-tryptophan. 334 to 335 (GT) is a chorismate binding site. Glu361 provides a ligand contact to Mg(2+). Residues Tyr449, Arg469, 487–489 (GAG), and Gly489 each bind chorismate. Residue Glu502 coordinates Mg(2+).

Belongs to the anthranilate synthase component I family. Tetramer of two components I and two components II. Mg(2+) is required as a cofactor.

The enzyme catalyses chorismate + L-glutamine = anthranilate + pyruvate + L-glutamate + H(+). It participates in amino-acid biosynthesis; L-tryptophan biosynthesis; L-tryptophan from chorismate: step 1/5. The polypeptide is Anthranilate synthase component 1 2 (trpE2) (Haloarcula marismortui (strain ATCC 43049 / DSM 3752 / JCM 8966 / VKM B-1809) (Halobacterium marismortui)).